A 238-amino-acid chain; its full sequence is Large ribosomal subunit protein uL2 (238 aa).

Residues 201 to 238 (PFGGGGRQHPGRPKTVSRNTPPGRKVGSIAARRTGVGH) are disordered.

This sequence belongs to the universal ribosomal protein uL2 family. Part of the 50S ribosomal subunit. Forms a bridge to the 30S subunit in the 70S ribosome.

Its function is as follows. One of the primary rRNA binding proteins. Required for association of the 30S and 50S subunits to form the 70S ribosome, for tRNA binding and peptide bond formation. It has been suggested to have peptidyltransferase activity; this is somewhat controversial. Makes several contacts with the 16S rRNA in the 70S ribosome. The chain is Large ribosomal subunit protein uL2 from Methanocella arvoryzae (strain DSM 22066 / NBRC 105507 / MRE50).